A 288-amino-acid chain; its full sequence is Ankyrin repeat and SOCS box protein 8 (288 aa).

Position 17 is a phosphoserine (Ser-17). ANK repeat units follow at residues 52–81, 85–113, 117–146, and 150–179; these read GTLKPLHCACMVSDADCVELLLEKGAEVNA, YNRTALHYAAEKDEACVEVLLEYGANPNA, NRDTPLHWAAFKNNAECVRALLESGASVNA, and NNDTPLSWAAMKGNLESVSILLDYGAEVRV. The SOCS box domain occupies 235–288; it reads QLCEKLTVLCSAPGTLKTLARYAVRRSLGLQYLPDAVKGLPLPASLKEYLLLLE.

Belongs to the ankyrin SOCS box (ASB) family. As to quaternary structure, interacts with TBK1; this interaction promotes TBK1 proteasomal degradation. Phosphorylated by TBK1. In terms of tissue distribution, highest level of expression in skeletal muscle. Also expressed in heart, brain, placenta, liver, kidney and pancreas.

It localises to the cytoplasm. It participates in protein modification; protein ubiquitination. Functionally, may be a substrate-recognition component of a SCF-like ECS (Elongin-Cullin-SOCS-box protein) E3 ubiquitin-protein ligase complex which mediates the ubiquitination and subsequent proteasomal degradation of target proteins. Inhibits IFN-beta production through the IRF3 signaling pathway by targeting TBK1 via 'Lys-48'-linked ubiquitination, leading to its proteasomal degradation. The sequence is that of Ankyrin repeat and SOCS box protein 8 (ASB8) from Homo sapiens (Human).